Consider the following 366-residue polypeptide: Sec-independent protein translocase protein TatC (366 aa).

7 helical membrane-spanning segments follow: residues 42–62, 70–90, 97–117, 134–154, 179–199, 207–227, and 230–250; these read VLAV…LFTM, HMPA…FIPL, AVFI…APGL, ILFY…VFGF, LFFA…LVIV, LAGF…ILTP, and VLSQ…GLFV. Over residues 266–279 the composition is skewed to acidic residues; sequence EAEESGAADDESDE. Residues 266–366 are disordered; that stretch reads EAEESGAADD…PSPKKPDSPV (101 aa). Basic and acidic residues-rich tracts occupy residues 281-290 and 301-318; these read VSARHAEYEA and DMDK…RLES. Residues 319-333 show a composition bias toward polar residues; sequence DSSASDDGPESNTAG.

Belongs to the TatC family. In terms of assembly, the Tat system comprises two distinct complexes: a TatABC complex, containing multiple copies of TatA, TatB and TatC subunits, and a separate TatA complex, containing only TatA subunits. Substrates initially bind to the TatABC complex, which probably triggers association of the separate TatA complex to form the active translocon.

Its subcellular location is the cell inner membrane. In terms of biological role, part of the twin-arginine translocation (Tat) system that transports large folded proteins containing a characteristic twin-arginine motif in their signal peptide across membranes. Together with TatB, TatC is part of a receptor directly interacting with Tat signal peptides. The sequence is that of Sec-independent protein translocase protein TatC from Halothiobacillus neapolitanus (strain ATCC 23641 / c2) (Thiobacillus neapolitanus).